We begin with the raw amino-acid sequence, 414 residues long: DNA primase small subunit PriS (414 aa).

Catalysis depends on residues D98, D100, and D312.

This sequence belongs to the eukaryotic-type primase small subunit family. As to quaternary structure, heterodimer of a small subunit (PriS) and a large subunit (PriL). It depends on Mg(2+) as a cofactor. The cofactor is Mn(2+).

Its function is as follows. Catalytic subunit of DNA primase, an RNA polymerase that catalyzes the synthesis of short RNA molecules used as primers for DNA polymerase during DNA replication. The small subunit contains the primase catalytic core and has DNA synthesis activity on its own. Binding to the large subunit stabilizes and modulates the activity, increasing the rate of DNA synthesis while decreasing the length of the DNA fragments, and conferring RNA synthesis capability. The DNA polymerase activity may enable DNA primase to also catalyze primer extension after primer synthesis. May also play a role in DNA repair. This is DNA primase small subunit PriS from Methanosarcina barkeri (strain Fusaro / DSM 804).